The primary structure comprises 363 residues: Ribosomal RNA large subunit methyltransferase M (363 aa).

S-adenosyl-L-methionine contacts are provided by residues serine 194, 227–230 (CPGG), aspartate 246, aspartate 266, and aspartate 284. The Proton acceptor role is filled by lysine 313.

This sequence belongs to the class I-like SAM-binding methyltransferase superfamily. RNA methyltransferase RlmE family. RlmM subfamily. Monomer.

The protein localises to the cytoplasm. The enzyme catalyses cytidine(2498) in 23S rRNA + S-adenosyl-L-methionine = 2'-O-methylcytidine(2498) in 23S rRNA + S-adenosyl-L-homocysteine + H(+). In terms of biological role, catalyzes the 2'-O-methylation at nucleotide C2498 in 23S rRNA. This is Ribosomal RNA large subunit methyltransferase M from Haemophilus influenzae (strain 86-028NP).